The chain runs to 436 residues: MALPTIAIVGRPNVGKSTLFNRIAGERISIVEDVEGVTRDRIYATANWLNRKFSIIDTGGIDDVDAPFMEQIKHQAEIAMDEADVIVFVVSGKEGITDADEYVARMLYKTHKPIILAVNKVDNPEMRNEIFDFYALGLGDPFPVSSVHGIGTGDVLDAIVENLPNEEVVENPDMIKFSLIGRPNVGKSSLINAILGEERVIASPVAGTTRDAIDTVFTDSEGQEFTMIDTAGMRKSGKVYENTEKYSVMRAMRAIDRSDVVLMVLNAEEGIREYDKRIAGFAHEAGKGIVIVVNKWDTLEKDNHTMKDWEEDIRDQFQYLSYAPIIFVSALTKQRLHKLPDMIKQISQSQNTRIPSAVLNDVIMDAIAINPTPTDKGKRLKIFYATQVATKPPTFVIFVNEEELMHFSYLRFLENQIRKAFVFEGTPIHLIARKRK.

2 EngA-type G domains span residues 4–167 (PTIA…PNEE) and 175–351 (IKFS…QSQN). GTP is bound by residues 10–17 (GRPNVGKS), 57–61 (DTGGI), 119–122 (NKVD), 181–188 (GRPNVGKS), 229–233 (DTAGM), and 294–297 (NKWD). The region spanning 352–436 (TRIPSAVLND…PIHLIARKRK (85 aa)) is the KH-like domain.

This sequence belongs to the TRAFAC class TrmE-Era-EngA-EngB-Septin-like GTPase superfamily. EngA (Der) GTPase family. Associates with the 50S ribosomal subunit.

In terms of biological role, GTPase that plays an essential role in the late steps of ribosome biogenesis. This chain is GTPase Der, found in Streptococcus sanguinis (strain SK36).